Here is a 303-residue protein sequence, read N- to C-terminus: MNPQELKSILSSGLLSFPVTDFNAQGDFHRAGYIKRLEWLAPYGASALFAAGGTGEFFSLAASEYSEIIKTAVDTCATSVPILAGVGGATRQAIEYAQEAERLGAKGLLLLPHYLTEASQDGVAAHVEAVCKSVKIGVVVYNRNVCRLTPTLLEQLAERCPNLIGYKDGLGDIELMVSIRRRLGDRFSYLGGLPTAEVYAAAYKALGVPVYSSAVFNFVPKLAMDFYHAIARDDHQAVGKYIDDFFLPYLEIRNRKAGYAVSIVKAGAKIAGYDAGPVRAPLTDLTSDECDMLAALMDKQGKQ.

This sequence belongs to the DapA family.

The catalysed reaction is 5-dehydro-4-deoxy-D-glucarate + H(+) = 2,5-dioxopentanoate + CO2 + H2O. It functions in the pathway carbohydrate acid metabolism; D-glucarate degradation; 2,5-dioxopentanoate from D-glucarate: step 2/2. In Pseudomonas syringae pv. syringae (strain B728a), this protein is Probable 5-dehydro-4-deoxyglucarate dehydratase.